We begin with the raw amino-acid sequence, 119 residues long: Urotensin-2B (119 aa).

The signal sequence occupies residues 1-28 (MNKILSSTVCFGLLTLLSVLSFLQSVHG). Positions 29-109 (RPYLTQGNEI…VDGLFSSHPS (81 aa)) are excised as a propeptide. Residues Cys-113 and Cys-118 are joined by a disulfide bond.

It belongs to the urotensin-2 family.

It is found in the secreted. Its function is as follows. Potent vasoconstrictor. The sequence is that of Urotensin-2B (UTS2B) from Homo sapiens (Human).